Here is a 425-residue protein sequence, read N- to C-terminus: Alpha-N-acetylgalactosaminidase (425 aa).

NAD(+) is bound by residues Asn-29 to Arg-30, Glu-51, Trp-99 to His-102, Glu-119 to Val-120, and Asn-148. Residue Tyr-177 participates in substrate binding. Residues Phe-194–Trp-198 and Tyr-211 contribute to the NAD(+) site. Substrate-binding positions include Tyr-211–His-214 and Tyr-293.

The protein belongs to the Gfo/Idh/MocA family. Glycosyl hydrolase 109 subfamily. It depends on NAD(+) as a cofactor.

The catalysed reaction is Cleavage of non-reducing alpha-(1-&gt;3)-N-acetylgalactosamine residues from human blood group A and AB mucin glycoproteins, Forssman hapten and blood group A lacto series glycolipids.. Glycosidase that has specific alpha-N-acetylgalactosaminidase activity. The sequence is that of Alpha-N-acetylgalactosaminidase from Bacteroides fragilis (strain ATCC 25285 / DSM 2151 / CCUG 4856 / JCM 11019 / LMG 10263 / NCTC 9343 / Onslow / VPI 2553 / EN-2).